The primary structure comprises 643 residues: Transmembrane protein 62 (643 aa).

A helical transmembrane segment spans residues 9 to 29 (VVAGLAAAAVAALLLEHYGLA). N180 is a glycosylation site (N-linked (GlcNAc...) asparagine). 4 helical membrane passes run 431-451 (IVARVLFVLIVLIQLTTLITF), 484-504 (YSVLLLTLYTVLGPWFVGEII), 532-552 (GIIQLVFFNIPLMAYVCWSLL), and 572-592 (IIPVYLLILLLYIWQVYSCYF).

The protein localises to the membrane. The sequence is that of Transmembrane protein 62 (Tmem62) from Mus musculus (Mouse).